Reading from the N-terminus, the 553-residue chain is Arginine--tRNA ligase (553 aa).

The 'HIGH' region signature appears at 130–140; sequence ANPTGDLHIGH.

The protein belongs to the class-I aminoacyl-tRNA synthetase family. Monomer.

Its subcellular location is the cytoplasm. The enzyme catalyses tRNA(Arg) + L-arginine + ATP = L-arginyl-tRNA(Arg) + AMP + diphosphate. The chain is Arginine--tRNA ligase from Staphylococcus aureus (strain MRSA252).